A 398-amino-acid polypeptide reads, in one-letter code: uncharacterized protein (398 aa).

10 helical membrane passes run 43–65 (PILP…VGGL), 89–108 (IFVV…LGLS), 156–173 (TAGA…ILYL), 180–198 (IILI…LYFV), 224–246 (LFIL…ILRA), 259–281 (IIIP…IPFG), 291–311 (SVLT…AYFI), 316–338 (LILL…KAYV), 351–373 (LGLF…GYLW), and 380–397 (TFLY…LLLF).

Belongs to the major facilitator superfamily.

The protein resides in the cell membrane. This is an uncharacterized protein from Methanocaldococcus jannaschii (strain ATCC 43067 / DSM 2661 / JAL-1 / JCM 10045 / NBRC 100440) (Methanococcus jannaschii).